We begin with the raw amino-acid sequence, 484 residues long: Probable D-lactate dehydrogenase, mitochondrial (484 aa).

The transit peptide at 1 to 52 (MAMLLRVATQRLSPWRSFCSRGSQGGLSQDFVEALKAVVGSPHVSTASAVRE) directs the protein to the mitochondrion. An N6-acetyllysine modification is found at lysine 36. The FAD-binding PCMH-type domain occupies 62–242 (RCQPPDAVVW…TSTTLRLHPA (181 aa)). Lysine 292 carries the post-translational modification N6-acetyllysine. Position 335 is an N6-acetyllysine; alternate (lysine 335). An N6-succinyllysine; alternate modification is found at lysine 335. Residues lysine 422 and lysine 449 each carry the N6-acetyllysine modification.

This sequence belongs to the FAD-binding oxidoreductase/transferase type 4 family. In terms of assembly, interacts with CSRP3. Requires FAD as cofactor. As to expression, readily detected in liver and kidney, with a weaker signal observed in heart, skeletal muscle, stomach, brain, and lung.

It localises to the mitochondrion. The catalysed reaction is (R)-lactate + 2 Fe(III)-[cytochrome c] = 2 Fe(II)-[cytochrome c] + pyruvate + 2 H(+). Involved in D-lactate, but not L-lactate catabolic process. This is Probable D-lactate dehydrogenase, mitochondrial from Mus musculus (Mouse).